Reading from the N-terminus, the 133-residue chain is ATP synthase epsilon chain (133 aa).

It belongs to the ATPase epsilon chain family. In terms of assembly, F-type ATPases have 2 components, CF(1) - the catalytic core - and CF(0) - the membrane proton channel. CF(1) has five subunits: alpha(3), beta(3), gamma(1), delta(1), epsilon(1). CF(0) has three main subunits: a, b and c.

The protein localises to the cell inner membrane. Produces ATP from ADP in the presence of a proton gradient across the membrane. The sequence is that of ATP synthase epsilon chain from Maricaulis maris (strain MCS10) (Caulobacter maris).